The chain runs to 59 residues: Large ribosomal subunit protein bL32 (59 aa).

The segment covering 1 to 15 (MAVPKRKTSKSKRDM) has biased composition (basic residues). A disordered region spans residues 1–21 (MAVPKRKTSKSKRDMRRASNS).

It belongs to the bacterial ribosomal protein bL32 family.

The polypeptide is Large ribosomal subunit protein bL32 (Alkaliphilus metalliredigens (strain QYMF)).